The chain runs to 114 residues: MAEPEQDIGEKPAVRIQNPKENDFIEIELKRQELSYQNLLNVSCCELGIKPERVEKIRKLPNTLLRKDKDIRRLRDFQEVELILMKNGSSRLTEYVPSLTERPCYDSKAAKMTY.

The sequence is that of Putative ANKRD40 C-terminal-like protein from Homo sapiens (Human).